Consider the following 599-residue polypeptide: Cytosolic Fe-S cluster assembly factor nar1 (599 aa).

Positions 20, 62, 65, 68, 210, 265, 468, and 472 each coordinate [4Fe-4S] cluster.

It belongs to the NARF family.

Component of the cytosolic Fe/S protein assembly machinery. Required for maturation of extramitochondrial Fe/S proteins. May play a role in the transfer of pre-assembled Fe/S clusters to target apoproteins. The protein is Cytosolic Fe-S cluster assembly factor nar1 (nar1) of Aspergillus terreus (strain NIH 2624 / FGSC A1156).